Reading from the N-terminus, the 135-residue chain is UPF0216 protein MTH_949 (135 aa).

It belongs to the UPF0216 family.

This Methanothermobacter thermautotrophicus (strain ATCC 29096 / DSM 1053 / JCM 10044 / NBRC 100330 / Delta H) (Methanobacterium thermoautotrophicum) protein is UPF0216 protein MTH_949.